Reading from the N-terminus, the 256-residue chain is MAVGKNKRLSKGKKGLKKKTLDPFTRKDWYQIKAPSSFQIRDVGKTLVNRTTGLKNANDSLKGRIVEVSLADLQKDEDHAFRKVKLRVDEVQGKNCLTNFHGLDFTSDKLRSLVRKWQSLIEANITVKTTDDYLLRLFAIAFTKRRPNQIKKTTYAASSQIRAIRKKMTEIIQREASTCTLTQLTAKLIPEVIGREIEKATQGIYPLQNVHIRKVKLLKAPKFDLGALLNLHGESNTDEQGQKVEREFKEKVLEEV.

Position 2 is an N-acetylalanine; partial (alanine 2).

Belongs to the eukaryotic ribosomal protein eS1 family. As to quaternary structure, component of the small ribosomal subunit. Mature ribosomes consist of a small (40S) and a large (60S) subunit. The 40S subunit contains about 33 different proteins and 1 molecule of RNA (18S). The 60S subunit contains about 49 different proteins and 3 molecules of RNA (25S, 5.8S and 5S).

It localises to the cytoplasm. In Botryotinia fuckeliana (strain B05.10) (Noble rot fungus), this protein is Small ribosomal subunit protein eS1 (rps1).